The sequence spans 337 residues: m7GpppX diphosphatase (337 aa).

The disordered stretch occupies residues 1 to 37 (MADTAPQPSKRKRERDPEEAEAPSTEEKEARVGNGTS). At Ala-2 the chain carries N-acetylalanine. Residues 10–13 (KRKR) carry the nuclear localization signal (NLS) motif. 2 positions are modified to phosphoserine: Ser-24 and Ser-101. An N6-acetyllysine mark is found at Lys-138 and Lys-142. Residues 142–154 (KYLHQDLHLVRET) carry the nuclear export sequence (NES) motif. Substrate-binding positions include Trp-175, Glu-185, Asp-205, Lys-207, and 268–279 (HYLPSYYHLHVH). The Histidine triad motif signature appears at 275-279 (HLHVH). The active-site Nucleophile is His-277.

The protein belongs to the HIT family. As to quaternary structure, homodimer. Associates with components of the exosome multienzyme ribonuclease complex, such as EXOSC3 and EXOSC4. Interacts with NDOR1.

It localises to the cytoplasm. Its subcellular location is the nucleus. It carries out the reaction a 5'-end (N(7)-methyl 5'-triphosphoguanosine)-ribonucleoside in mRNA + H2O = N(7)-methyl-GMP + a 5'-end diphospho-ribonucleoside in mRNA + 2 H(+). With respect to regulation, the hydrolytic product 7-methylguanosine diphosphate (m7GDP) efficiently inhibits the decapping scavenger activity and acts as a competitive inhibitor in vitro. Inhibited by 2,4-diaminoquinazoline. Its function is as follows. Decapping scavenger enzyme that catalyzes the cleavage of a residual cap structure following the degradation of mRNAs by the 3'-&gt;5' exosome-mediated mRNA decay pathway. Hydrolyzes cap analog structures like 7-methylguanosine nucleoside triphosphate (m7GpppG) with up to 10 nucleotide substrates (small capped oligoribonucleotides) and specifically releases 5'-phosphorylated RNA fragments and 7-methylguanosine monophosphate (m7GMP). Cleaves cap analog structures like tri-methyl guanosine nucleoside triphosphate (m3(2,2,7)GpppG) with very poor efficiency. Does not hydrolyze unmethylated cap analog (GpppG) and shows no decapping activity on intact m7GpppG-capped mRNA molecules longer than 25 nucleotides. Does not hydrolyze 7-methylguanosine diphosphate (m7GDP) to m7GMP. May also play a role in the 5'-&gt;3 mRNA decay pathway; m7GDP, the downstream product released by the 5'-&gt;3' mRNA mediated decapping activity, may be also converted by DCPS to m7GMP. Binds to m7GpppG and strongly to m7GDP. Plays a role in first intron splicing of pre-mRNAs. Inhibits activation-induced cell death. This chain is m7GpppX diphosphatase (DCPS), found in Sus scrofa (Pig).